We begin with the raw amino-acid sequence, 440 residues long: Enolase (440 aa).

Glutamine 163 lines the (2R)-2-phosphoglycerate pocket. Residue glutamate 205 is the Proton donor of the active site. Positions 242, 288, and 315 each coordinate Mg(2+). 4 residues coordinate (2R)-2-phosphoglycerate: lysine 340, arginine 369, serine 370, and lysine 391. The active-site Proton acceptor is the lysine 340.

It belongs to the enolase family. Mg(2+) serves as cofactor.

The protein resides in the cytoplasm. It is found in the secreted. The protein localises to the cell surface. It carries out the reaction (2R)-2-phosphoglycerate = phosphoenolpyruvate + H2O. It participates in carbohydrate degradation; glycolysis; pyruvate from D-glyceraldehyde 3-phosphate: step 4/5. Functionally, catalyzes the reversible conversion of 2-phosphoglycerate (2-PG) into phosphoenolpyruvate (PEP). It is essential for the degradation of carbohydrates via glycolysis. This is Enolase from Pediococcus pentosaceus (strain ATCC 25745 / CCUG 21536 / LMG 10740 / 183-1w).